Reading from the N-terminus, the 291-residue chain is Nucleotide-binding protein LGAS_1315 (291 aa).

13 to 20 (GMSGAGKT) is an ATP binding site. 63–66 (DLRV) serves as a coordination point for GTP.

It belongs to the RapZ-like family.

Its function is as follows. Displays ATPase and GTPase activities. The protein is Nucleotide-binding protein LGAS_1315 of Lactobacillus gasseri (strain ATCC 33323 / DSM 20243 / BCRC 14619 / CIP 102991 / JCM 1131 / KCTC 3163 / NCIMB 11718 / NCTC 13722 / AM63).